A 471-amino-acid polypeptide reads, in one-letter code: GDP-fucose protein O-fucosyltransferase 3 (471 aa).

The Cytoplasmic segment spans residues 1-8; it reads MNRMWEKK. Residues 9–29 traverse the membrane as a helical; Signal-anchor for type II membrane protein segment; that stretch reads FWISCFFIILFFILVTLQVMV. The Lumenal portion of the chain corresponds to 30 to 471; the sequence is ELGRFEKRET…EFWNLVFKFQ (442 aa). 4 N-linked (GlcNAc...) asparagine glycosylation sites follow: Asn-102, Asn-122, Asn-160, and Asn-310. A disulfide bridge links Cys-381 with Cys-384. N-linked (GlcNAc...) asparagine glycosylation is present at Asn-457.

This sequence belongs to the glycosyltransferase 10 family.

It is found in the endoplasmic reticulum membrane. The enzyme catalyses L-threonyl-[protein] + GDP-beta-L-fucose = 3-O-(alpha-L-fucosyl)-L-threonyl-[protein] + GDP + H(+). It catalyses the reaction L-seryl-[protein] + GDP-beta-L-fucose = 3-O-(alpha-L-fucosyl)-L-seryl-[protein] + GDP + H(+). It participates in protein modification; protein glycosylation. Its function is as follows. Protein O-fucosyltransferase that specifically catalyzes O-fucosylation of serine or threonine residues in EMI domains of target proteins. Attaches fucose through an O-glycosidic linkage. O-fucosylation of EMI domain-containing proteins may be required for facilitating protein folding and secretion. The chain is GDP-fucose protein O-fucosyltransferase 3 (fut10) from Xenopus tropicalis (Western clawed frog).